A 325-amino-acid polypeptide reads, in one-letter code: Phospholipid phosphatase-related protein type 1 (325 aa).

A run of 3 helical transmembrane segments spans residues 11 to 31, 67 to 87, and 127 to 147; these read YSII…TVLL, FISP…IIFI, and FIGV…AGQV. N-linked (GlcNAc...) asparagine glycosylation is present at asparagine 163. Transmembrane regions (helical) follow at residues 201 to 218, 230 to 247, and 257 to 277; these read AALS…ITST, VLCL…LNRV, and VIGG…CVVH. Asparagine 316 carries an N-linked (GlcNAc...) asparagine glycan.

It belongs to the PA-phosphatase related phosphoesterase family.

The protein localises to the cell membrane. It is found in the cell projection. Its subcellular location is the neuron projection. Its function is as follows. May play a role in neurite outgrowth and neurogenesis. This is Phospholipid phosphatase-related protein type 1 from Xenopus tropicalis (Western clawed frog).